The primary structure comprises 96 residues: ESAT-6-like protein SAG1039 (96 aa).

It belongs to the WXG100 family. sagEsxA-like subfamily. Homodimer.

The sequence is that of ESAT-6-like protein SAG1039 from Streptococcus agalactiae serotype V (strain ATCC BAA-611 / 2603 V/R).